Reading from the N-terminus, the 373-residue chain is NAD-dependent protein deacylase SRT2 (373 aa).

A mitochondrion-targeting transit peptide spans M1–V47. The Deacetylase sirtuin-type domain occupies D75–L373. Residues G100–S120 and Q179–D182 each bind NAD(+). Catalysis depends on H196, which acts as the Proton acceptor. Positions 204, 207, 271, and 274 each coordinate Zn(2+). NAD(+) contacts are provided by residues G311–S313, N337–G339, and V355.

The protein belongs to the sirtuin family. Class II subfamily. Binds to the promoter region of genes influenced by ethylene. Interacts with ENAP1; this interaction is enhanced in the presence of ethylene. Requires Zn(2+) as cofactor.

It is found in the mitochondrion matrix. The protein resides in the nucleus. It catalyses the reaction N(6)-acetyl-L-lysyl-[protein] + NAD(+) + H2O = 2''-O-acetyl-ADP-D-ribose + nicotinamide + L-lysyl-[protein]. Functionally, NAD-dependent protein deacylase. Catalyzes the NAD-dependent hydrolysis of acyl groups from lysine residues. Involved in responses to ethylene leading to the transcriptional repression of some ethylene-responsive genes via the regulation of histone acetylation H3K9Ac. Negatively regulates plant basal defense against plant pathogens, possibly by suppressing salicylic acid biosynthesis. The protein is NAD-dependent protein deacylase SRT2 of Arabidopsis thaliana (Mouse-ear cress).